The primary structure comprises 288 residues: Glutamate racemase (288 aa).

A disordered region spans residues 1 to 21 (MAIARQDVNISSPEATTSDAQ). Over residues 8-21 (VNISSPEATTSDAQ) the composition is skewed to polar residues. Substrate is bound by residues 32-33 (DS) and 64-65 (YG). The active-site Proton donor/acceptor is C96. 97-98 (NT) is a substrate binding site. The active-site Proton donor/acceptor is the C209. Position 210–211 (210–211 (TH)) interacts with substrate.

Belongs to the aspartate/glutamate racemases family.

It carries out the reaction L-glutamate = D-glutamate. Its pathway is cell wall biogenesis; peptidoglycan biosynthesis. Provides the (R)-glutamate required for cell wall biosynthesis. The sequence is that of Glutamate racemase from Proteus mirabilis (strain HI4320).